Here is a 71-residue protein sequence, read N- to C-terminus: Exodeoxyribonuclease 7 small subunit (71 aa).

The protein belongs to the XseB family. In terms of assembly, heterooligomer composed of large and small subunits.

The protein localises to the cytoplasm. It catalyses the reaction Exonucleolytic cleavage in either 5'- to 3'- or 3'- to 5'-direction to yield nucleoside 5'-phosphates.. Its function is as follows. Bidirectionally degrades single-stranded DNA into large acid-insoluble oligonucleotides, which are then degraded further into small acid-soluble oligonucleotides. The sequence is that of Exodeoxyribonuclease 7 small subunit from Streptococcus uberis (strain ATCC BAA-854 / 0140J).